The primary structure comprises 233 residues: Glycerol-3-phosphate acyltransferase 5 (233 aa).

5 helical membrane passes run 3–23 (LVFI…MAYL), 69–89 (MILL…VGLF), 116–136 (LVMA…FGLF), 143–163 (VFLG…FFGI), and 168–188 (TISW…LMAP).

The protein belongs to the PlsY family. In terms of assembly, probably interacts with PlsX.

It is found in the cell membrane. It carries out the reaction an acyl phosphate + sn-glycerol 3-phosphate = a 1-acyl-sn-glycero-3-phosphate + phosphate. The protein operates within lipid metabolism; phospholipid metabolism. Functionally, catalyzes the transfer of an acyl group from acyl-phosphate (acyl-PO(4)) to glycerol-3-phosphate (G3P) to form lysophosphatidic acid (LPA). This enzyme utilizes acyl-phosphate as fatty acyl donor, but not acyl-CoA or acyl-ACP. This is Glycerol-3-phosphate acyltransferase 5 from Dehalococcoides mccartyi (strain ATCC BAA-2266 / KCTC 15142 / 195) (Dehalococcoides ethenogenes (strain 195)).